The chain runs to 152 residues: Ribonuclease HI (152 aa).

Residues 1-142 (MDSKVVIYTD…ADKLAVQGRE (142 aa)) form the RNase H type-1 domain. 4 residues coordinate Mg(2+): Asp-10, Glu-48, Asp-70, and Asp-134.

It belongs to the RNase H family. In terms of assembly, monomer. The cofactor is Mg(2+).

It localises to the cytoplasm. It carries out the reaction Endonucleolytic cleavage to 5'-phosphomonoester.. In terms of biological role, endonuclease that specifically degrades the RNA of RNA-DNA hybrids. This Rickettsia conorii (strain ATCC VR-613 / Malish 7) protein is Ribonuclease HI.